Consider the following 436-residue polypeptide: Repulsive guidance molecule B (436 aa).

A signal peptide spans 1 to 48; sequence MGVRAAPSCAAAPAAAGAEQSRRPGLWPPSPPPPLLLLLLLSLGLLHA. N123 carries N-linked (GlcNAc...) asparagine glycosylation. Cystine bridges form between C142–C229 and C166–C315. An N-linked (GlcNAc...) asparagine glycan is attached at N386. Residue C415 is the site of GPI-anchor amidated cysteine attachment. A propeptide spans 416-436 (removed in mature form); it reads GGCRDLPVGLGLTCLILIMFL.

This sequence belongs to the repulsive guidance molecule (RGM) family. Homooligomer. Interacts with DRGX. Interacts with BMP2 and BMP4. Interacts with the BMP type I receptors ACVR1, BMPR1A and BMPR1B and with the BMP type II receptor ACVR2B. The functional complex with its receptor NEO1/neogenin appears to be a heterotetramer with a 2:2 stoichiometry, RGM molecules acting as staples that bring two NEO1 receptors together without interacting themselves, this arrangement leads to activation of downstream signaling via RhoA. Post-translationally, GPI-anchored. In terms of processing, autocatalytically cleaved at low pH; the two chains remain linked via two disulfide bonds. Detected in neonatal and adult dorsal root ganglion sensory neurons, spinal cord, and brain (at protein level). Also expressed at high levels in retinal ganglion cells of developing mouse, extending to the optic nerve (at protein level). Expressed in testis, epididymis, ovary, uterus, and pituitary.

The protein resides in the cell membrane. It localises to the membrane raft. Its function is as follows. Member of the repulsive guidance molecule (RGM) family that contributes to the patterning of the developing nervous system. Acts as a bone morphogenetic protein (BMP) coreceptor that potentiates BMP signaling. Promotes neuronal adhesion. May inhibit neurite outgrowth. The protein is Repulsive guidance molecule B of Mus musculus (Mouse).